We begin with the raw amino-acid sequence, 498 residues long: Cytochrome c-552 (498 aa).

The N-terminal stretch at 1 to 31 is a signal peptide; the sequence is MKNKERKLKSWQGWLIFSSSMVVVFCLGLLA. Heme c is bound at residue histidine 119. Positions 148, 151, and 152 each coordinate heme. Residues cysteine 186, cysteine 189, histidine 190, cysteine 228, cysteine 231, and histidine 232 each coordinate heme c. Ca(2+)-binding residues include glutamate 234, tyrosine 235, lysine 280, and glutamine 282. Substrate is bound at residue tyrosine 235. Histidine 283 serves as a coordination point for substrate. Residues histidine 294, cysteine 301, cysteine 304, histidine 305, histidine 319, cysteine 332, cysteine 335, histidine 336, and histidine 411 each coordinate heme c.

It belongs to the cytochrome c-552 family. The cofactor is Ca(2+). Heme c is required as a cofactor.

It is found in the periplasm. It catalyses the reaction 6 Fe(III)-[cytochrome c] + NH4(+) + 2 H2O = 6 Fe(II)-[cytochrome c] + nitrite + 8 H(+). The protein operates within nitrogen metabolism; nitrate reduction (assimilation). Functionally, catalyzes the reduction of nitrite to ammonia, consuming six electrons in the process. In Porphyromonas gingivalis (strain ATCC BAA-308 / W83), this protein is Cytochrome c-552.